We begin with the raw amino-acid sequence, 271 residues long: MNFFQAIILAIAQGVSELFPISSVAHSVIIPYLFGWKLSPFFLKTNFLEFVVMMHIGTTISLIVYFRKDWKKMLKSLFNKKTSKRNLALIVIGTIPAIILGAIFEQTITNAFSDVIVASIFLIFNGLLLFFGEQTKKRGNKSIEDLKGWQALVIGCFQSLALIPGFSRSGSSITAGFWMGLSNEESARFSMLLSTPMVAGAATLEIPKLIKNHVPGLLSLSLIGGIVAGLAAFLSIYILMHWFNHKKNNTMLPFAIYCIVIGIGVLASKAI.

A run of 8 helical transmembrane segments spans residues 1–21 (MNFF…LFPI), 46–66 (NFLE…IVYF), 88–108 (ALIV…EQTI), 111–131 (AFSD…LLFF), 146–166 (LKGW…IPGF), 190–210 (SMLL…PKLI), 220–240 (LSLI…YILM), and 251–271 (MLPF…SKAI).

The protein belongs to the UppP family.

It is found in the cell membrane. The enzyme catalyses di-trans,octa-cis-undecaprenyl diphosphate + H2O = di-trans,octa-cis-undecaprenyl phosphate + phosphate + H(+). Catalyzes the dephosphorylation of undecaprenyl diphosphate (UPP). Confers resistance to bacitracin. The chain is Undecaprenyl-diphosphatase 2 from Oenococcus oeni (strain ATCC BAA-331 / PSU-1).